Here is a 385-residue protein sequence, read N- to C-terminus: 8-amino-7-oxononanoate synthase (385 aa).

Arg21 provides a ligand contact to substrate. 108 to 109 (GF) serves as a coordination point for pyridoxal 5'-phosphate. Residue His133 coordinates substrate. 3 residues coordinate pyridoxal 5'-phosphate: Ser179, His207, and Thr233. Lys236 is subject to N6-(pyridoxal phosphate)lysine. Residue Thr352 coordinates substrate.

The protein belongs to the class-II pyridoxal-phosphate-dependent aminotransferase family. BioF subfamily. In terms of assembly, homodimer. It depends on pyridoxal 5'-phosphate as a cofactor.

It catalyses the reaction 6-carboxyhexanoyl-[ACP] + L-alanine + H(+) = (8S)-8-amino-7-oxononanoate + holo-[ACP] + CO2. It participates in cofactor biosynthesis; biotin biosynthesis. Its function is as follows. Catalyzes the decarboxylative condensation of pimeloyl-[acyl-carrier protein] and L-alanine to produce 8-amino-7-oxononanoate (AON), [acyl-carrier protein], and carbon dioxide. This Salmonella enteritidis PT4 (strain P125109) protein is 8-amino-7-oxononanoate synthase.